A 381-amino-acid polypeptide reads, in one-letter code: 3-dehydroquinate synthase (381 aa).

NAD(+)-binding positions include 81–86, 115–119, 139–140, lysine 152, and lysine 161; these read EGESSK, GVIGD, and TS. Zn(2+) contacts are provided by glutamate 194, histidine 256, and histidine 274.

This sequence belongs to the sugar phosphate cyclases superfamily. Dehydroquinate synthase family. Co(2+) serves as cofactor. The cofactor is Zn(2+). NAD(+) is required as a cofactor.

The protein resides in the cytoplasm. It carries out the reaction 7-phospho-2-dehydro-3-deoxy-D-arabino-heptonate = 3-dehydroquinate + phosphate. Its pathway is metabolic intermediate biosynthesis; chorismate biosynthesis; chorismate from D-erythrose 4-phosphate and phosphoenolpyruvate: step 2/7. Its function is as follows. Catalyzes the conversion of 3-deoxy-D-arabino-heptulosonate 7-phosphate (DAHP) to dehydroquinate (DHQ). The chain is 3-dehydroquinate synthase from Rhodopseudomonas palustris (strain ATCC BAA-98 / CGA009).